Reading from the N-terminus, the 141-residue chain is Hemoglobin subunit alpha-2 (141 aa).

The region spanning 1–141 (VLTEDDKNHV…VCKDLVSKYR (141 aa)) is the Globin domain. Position 58 (H58) interacts with O2. H87 is a binding site for heme b.

It belongs to the globin family. The major hemoglobin component (HbIII) is a heterotetramer of two alpha-2 chains and two beta-1 chains. As to expression, red blood cells.

In terms of biological role, involved in oxygen transport from the lung to the various peripheral tissues. The sequence is that of Hemoglobin subunit alpha-2 from Varanus albigularis (White-throated monitor).